Here is a 459-residue protein sequence, read N- to C-terminus: Protein BTN1 (459 aa).

The next 11 membrane-spanning stretches (helical) occupy residues valine 37–valine 57, alanine 73–isoleucine 93, isoleucine 102–glutamate 122, leucine 129–leucine 149, glycine 167–valine 187, glycine 189–leucine 209, valine 240–alanine 260, alanine 283–asparagine 303, tyrosine 325–serine 342, leucine 352–leucine 372, and phenylalanine 374–alanine 394.

Belongs to the battenin family.

The protein resides in the vacuole membrane. Involved in vacuolar transport and vacuole pH homeostasis. Also required for cytokinesis. The protein is Protein BTN1 (BTN1) of Chaetomium globosum (strain ATCC 6205 / CBS 148.51 / DSM 1962 / NBRC 6347 / NRRL 1970) (Soil fungus).